We begin with the raw amino-acid sequence, 607 residues long: Phosphogluconate dehydratase (607 aa).

C156 and C223 together coordinate [4Fe-4S] cluster.

The protein belongs to the IlvD/Edd family. It depends on [4Fe-4S] cluster as a cofactor.

It catalyses the reaction 6-phospho-D-gluconate = 2-dehydro-3-deoxy-6-phospho-D-gluconate + H2O. It participates in carbohydrate metabolism; Entner-Doudoroff pathway. Catalyzes the dehydration of 6-phospho-D-gluconate to 2-dehydro-3-deoxy-6-phospho-D-gluconate. The sequence is that of Phosphogluconate dehydratase from Zymomonas mobilis subsp. mobilis (strain ATCC 31821 / ZM4 / CP4).